We begin with the raw amino-acid sequence, 369 residues long: Peptide chain release factor 2 (369 aa).

Residue Gln-251 is modified to N5-methylglutamine.

Belongs to the prokaryotic/mitochondrial release factor family. In terms of processing, methylated by PrmC. Methylation increases the termination efficiency of RF2.

The protein localises to the cytoplasm. Functionally, peptide chain release factor 2 directs the termination of translation in response to the peptide chain termination codons UGA and UAA. The chain is Peptide chain release factor 2 (prfB) from Thermotoga maritima (strain ATCC 43589 / DSM 3109 / JCM 10099 / NBRC 100826 / MSB8).